Consider the following 440-residue polypeptide: Cytochrome c biogenesis protein Ccs1 (440 aa).

The next 3 membrane-spanning stretches (helical) occupy residues 25-45, 84-104, and 170-190; these read LQFS…GTVI, TWWF…CSIS, and LAPI…VLGL.

It belongs to the Ccs1/CcsB family. In terms of assembly, may interact with CcsA.

Its subcellular location is the plastid. The protein resides in the chloroplast thylakoid membrane. Its function is as follows. Required during biogenesis of c-type cytochromes (cytochrome c6 and cytochrome f) at the step of heme attachment. This Pyropia yezoensis (Susabi-nori) protein is Cytochrome c biogenesis protein Ccs1.